The sequence spans 218 residues: Imidazole glycerol phosphate synthase subunit HisH (218 aa).

Residues 7-211 (STVIIDTGCA…LALDKASLDA (205 aa)) enclose the Glutamine amidotransferase type-1 domain. The active-site Nucleophile is C82. Residues H186 and E188 contribute to the active site.

As to quaternary structure, heterodimer of HisH and HisF.

The protein resides in the cytoplasm. The enzyme catalyses 5-[(5-phospho-1-deoxy-D-ribulos-1-ylimino)methylamino]-1-(5-phospho-beta-D-ribosyl)imidazole-4-carboxamide + L-glutamine = D-erythro-1-(imidazol-4-yl)glycerol 3-phosphate + 5-amino-1-(5-phospho-beta-D-ribosyl)imidazole-4-carboxamide + L-glutamate + H(+). The catalysed reaction is L-glutamine + H2O = L-glutamate + NH4(+). It participates in amino-acid biosynthesis; L-histidine biosynthesis; L-histidine from 5-phospho-alpha-D-ribose 1-diphosphate: step 5/9. In terms of biological role, IGPS catalyzes the conversion of PRFAR and glutamine to IGP, AICAR and glutamate. The HisH subunit catalyzes the hydrolysis of glutamine to glutamate and ammonia as part of the synthesis of IGP and AICAR. The resulting ammonia molecule is channeled to the active site of HisF. The chain is Imidazole glycerol phosphate synthase subunit HisH from Shewanella sediminis (strain HAW-EB3).